We begin with the raw amino-acid sequence, 445 residues long: Methionine aminopeptidase 2 (445 aa).

A disordered region spans residues 1 to 89 (MAAQAPVDEI…DPPRVLISQL (89 aa)). The segment covering 60–74 (AKKKKKRKPKKKKKN) has biased composition (basic residues). Residue H198 participates in substrate binding. Residues D218, D229, and H298 each coordinate a divalent metal cation. H306 is a substrate binding site. E331 and E426 together coordinate a divalent metal cation.

This sequence belongs to the peptidase M24A family. Methionine aminopeptidase eukaryotic type 2 subfamily. Requires Co(2+) as cofactor. It depends on Zn(2+) as a cofactor. Mn(2+) is required as a cofactor. The cofactor is Fe(2+).

It is found in the cytoplasm. The catalysed reaction is Release of N-terminal amino acids, preferentially methionine, from peptides and arylamides.. Functionally, cotranslationally removes the N-terminal methionine from nascent proteins. The N-terminal methionine is often cleaved when the second residue in the primary sequence is small and uncharged (Met-Ala-, Cys, Gly, Pro, Ser, Thr, or Val). The polypeptide is Methionine aminopeptidase 2 (Podospora anserina (strain S / ATCC MYA-4624 / DSM 980 / FGSC 10383) (Pleurage anserina)).